A 354-amino-acid chain; its full sequence is UDP-N-acetylglucosamine--N-acetylmuramyl-(pentapeptide) pyrophosphoryl-undecaprenol N-acetylglucosamine transferase (354 aa).

UDP-N-acetyl-alpha-D-glucosamine-binding positions include 11-13 (TGG), N117, R160, S186, and Q288.

The protein belongs to the glycosyltransferase 28 family. MurG subfamily.

It is found in the cell inner membrane. It catalyses the reaction di-trans,octa-cis-undecaprenyl diphospho-N-acetyl-alpha-D-muramoyl-L-alanyl-D-glutamyl-meso-2,6-diaminopimeloyl-D-alanyl-D-alanine + UDP-N-acetyl-alpha-D-glucosamine = di-trans,octa-cis-undecaprenyl diphospho-[N-acetyl-alpha-D-glucosaminyl-(1-&gt;4)]-N-acetyl-alpha-D-muramoyl-L-alanyl-D-glutamyl-meso-2,6-diaminopimeloyl-D-alanyl-D-alanine + UDP + H(+). It participates in cell wall biogenesis; peptidoglycan biosynthesis. Cell wall formation. Catalyzes the transfer of a GlcNAc subunit on undecaprenyl-pyrophosphoryl-MurNAc-pentapeptide (lipid intermediate I) to form undecaprenyl-pyrophosphoryl-MurNAc-(pentapeptide)GlcNAc (lipid intermediate II). The protein is UDP-N-acetylglucosamine--N-acetylmuramyl-(pentapeptide) pyrophosphoryl-undecaprenol N-acetylglucosamine transferase of Rickettsia canadensis (strain McKiel).